The following is a 317-amino-acid chain: Acetyl-coenzyme A carboxylase carboxyl transferase subunit alpha (317 aa).

Positions 33 to 294 (NLDDEIARLQ…KQRLLEDLAD (262 aa)) constitute a CoA carboxyltransferase C-terminal domain.

The protein belongs to the AccA family. Acetyl-CoA carboxylase is a heterohexamer composed of biotin carboxyl carrier protein (AccB), biotin carboxylase (AccC) and two subunits each of ACCase subunit alpha (AccA) and ACCase subunit beta (AccD).

Its subcellular location is the cytoplasm. It carries out the reaction N(6)-carboxybiotinyl-L-lysyl-[protein] + acetyl-CoA = N(6)-biotinyl-L-lysyl-[protein] + malonyl-CoA. It functions in the pathway lipid metabolism; malonyl-CoA biosynthesis; malonyl-CoA from acetyl-CoA: step 1/1. Functionally, component of the acetyl coenzyme A carboxylase (ACC) complex. First, biotin carboxylase catalyzes the carboxylation of biotin on its carrier protein (BCCP) and then the CO(2) group is transferred by the carboxyltransferase to acetyl-CoA to form malonyl-CoA. The polypeptide is Acetyl-coenzyme A carboxylase carboxyl transferase subunit alpha (Glaesserella parasuis serovar 5 (strain SH0165) (Haemophilus parasuis)).